Consider the following 614-residue polypeptide: Subtilin transport ATP-binding protein SpaT (614 aa).

The next 5 membrane-spanning stretches (helical) occupy residues 34–54, 69–89, 147–167, 175–195, and 267–287; these read FLKL…SLYI, VSIV…SELI, IIQA…SIAF, VSLL…KIGQ, and IAVQ…AFAG. Positions 34-320 constitute an ABC transmembrane type-1 domain; the sequence is FLKLIRFSII…IMTSIYSIYN (287 aa). An ABC transporter domain is found at 353 to 593; the sequence is VVFQNVSFIY…CPLYKKMDES (241 aa). 387–394 contributes to the ATP binding site; the sequence is GPNGSGKK.

The protein belongs to the ABC transporter superfamily.

The protein localises to the cell membrane. Functionally, probably implicated in the export process of the lantibiotic subtilin. The polypeptide is Subtilin transport ATP-binding protein SpaT (spaT) (Bacillus subtilis).